The following is a 299-amino-acid chain: Diphthine methyl ester synthase 1 (299 aa).

S-adenosyl-L-methionine contacts are provided by residues leucine 9, aspartate 85, glycine 88, serine 113–valine 114, leucine 164, leucine 222, and histidine 247.

It belongs to the diphthine synthase family.

The protein localises to the cytoplasm. The enzyme catalyses 2-[(3S)-amino-3-carboxypropyl]-L-histidyl-[translation elongation factor 2] + 4 S-adenosyl-L-methionine = diphthine methyl ester-[translation elongation factor 2] + 4 S-adenosyl-L-homocysteine + 3 H(+). It functions in the pathway protein modification; peptidyl-diphthamide biosynthesis. S-adenosyl-L-methionine-dependent methyltransferase that catalyzes four methylations of the modified target histidine residue in translation elongation factor 2 (EF-2), to form an intermediate called diphthine methyl ester. The four successive methylation reactions represent the second step of diphthamide biosynthesis. The polypeptide is Diphthine methyl ester synthase 1 (DPH5) (Candida albicans (strain SC5314 / ATCC MYA-2876) (Yeast)).